A 259-amino-acid chain; its full sequence is Small ribosomal subunit protein uS2 (259 aa).

Belongs to the universal ribosomal protein uS2 family.

The sequence is that of Small ribosomal subunit protein uS2 from Streptococcus pneumoniae serotype 2 (strain D39 / NCTC 7466).